A 470-amino-acid chain; its full sequence is 6-phosphofructo-2-kinase/fructose-2,6-bisphosphatase (470 aa).

The interval 1-249 (MAAVASGQLT…VYYLMNTHVT (249 aa)) is 6-phosphofructo-2-kinase. Serine 31 carries the phosphoserine; by PKA modification. 47-55 (GLRRPGKTY) provides a ligand contact to ATP. Beta-D-fructose 6-phosphate-binding residues include arginine 80 and arginine 104. The active site involves aspartate 130. Beta-D-fructose 6-phosphate contacts are provided by threonine 132 and arginine 138. Cysteine 160 is a catalytic residue. 169 to 174 (NIKQVK) contributes to the ATP binding site. Residues lysine 174, arginine 195, and tyrosine 199 each coordinate beta-D-fructose 6-phosphate. The interval 250–469 (PRAIYLSRHG…AEALVTVPEH (220 aa)) is fructose-2,6-bisphosphatase. Arginine 257 contributes to the beta-D-fructose 2,6-bisphosphate binding site. Histidine 258 acts as the Tele-phosphohistidine intermediate in catalysis. Beta-D-fructose 2,6-bisphosphate-binding residues include asparagine 264 and glycine 270. Glutamate 327 functions as the Proton donor/acceptor in the catalytic mechanism. Beta-D-fructose 2,6-bisphosphate is bound by residues tyrosine 338, arginine 352, lysine 356, tyrosine 367, glutamine 393, and arginine 397. Residue 349 to 352 (FALR) participates in ATP binding. ATP-binding positions include 393–397 (QAVMR) and tyrosine 429.

The protein in the C-terminal section; belongs to the phosphoglycerate mutase family. In terms of assembly, homodimer. Liver.

The enzyme catalyses beta-D-fructose 2,6-bisphosphate + H2O = beta-D-fructose 6-phosphate + phosphate. It carries out the reaction beta-D-fructose 6-phosphate + ATP = beta-D-fructose 2,6-bisphosphate + ADP + H(+). Its activity is regulated as follows. Phosphorylation results in inhibition of the kinase activity. Functionally, synthesis and degradation of fructose 2,6-bisphosphate. In Gallus gallus (Chicken), this protein is 6-phosphofructo-2-kinase/fructose-2,6-bisphosphatase.